Here is a 354-residue protein sequence, read N- to C-terminus: 3-dehydroquinate synthase (354 aa).

NAD(+)-binding positions include 69-74 (DGEAEK), 103-107 (GVIGD), 127-128 (TS), K140, and K149. 3 residues coordinate Zn(2+): E182, H245, and H262.

This sequence belongs to the sugar phosphate cyclases superfamily. Dehydroquinate synthase family. The cofactor is Co(2+). Requires Zn(2+) as cofactor. NAD(+) serves as cofactor.

Its subcellular location is the cytoplasm. The enzyme catalyses 7-phospho-2-dehydro-3-deoxy-D-arabino-heptonate = 3-dehydroquinate + phosphate. Its pathway is metabolic intermediate biosynthesis; chorismate biosynthesis; chorismate from D-erythrose 4-phosphate and phosphoenolpyruvate: step 2/7. Functionally, catalyzes the conversion of 3-deoxy-D-arabino-heptulosonate 7-phosphate (DAHP) to dehydroquinate (DHQ). The protein is 3-dehydroquinate synthase of Colwellia psychrerythraea (strain 34H / ATCC BAA-681) (Vibrio psychroerythus).